The sequence spans 583 residues: Phosphoglucomutase, cytoplasmic (583 aa).

Positions 1-20 are disordered; the sequence is MANFKVSRVETTPFEGQKPG. Residues Arg25 and Ser124 each contribute to the alpha-D-glucose 1,6-bisphosphate site. Catalysis depends on Ser124, which acts as the Phosphoserine intermediate. Ser124, Asp300, Asp302, and Asp304 together coordinate Mg(2+). Phosphoserine is present on Ser124. 6 residues coordinate alpha-D-glucose 1,6-bisphosphate: Asp304, Arg305, Thr368, Glu387, Ser389, and Lys400.

The protein belongs to the phosphohexose mutase family. Monomer. Mg(2+) is required as a cofactor.

The protein resides in the cytoplasm. The catalysed reaction is alpha-D-glucose 1-phosphate = alpha-D-glucose 6-phosphate. It catalyses the reaction O-phospho-L-seryl-[protein] + alpha-D-glucose 1-phosphate = alpha-D-glucose 1,6-bisphosphate + L-seryl-[protein]. It carries out the reaction alpha-D-glucose 1,6-bisphosphate + L-seryl-[protein] = O-phospho-L-seryl-[protein] + alpha-D-glucose 6-phosphate. In terms of biological role, catalyzes the reversible isomerization of alpha-D-glucose 1-phosphate to alpha-D-glucose 6-phosphate. The mechanism proceeds via the intermediate compound alpha-D-glucose 1,6-bisphosphate. This enzyme participates in both the breakdown and synthesis of glucose. This is Phosphoglucomutase, cytoplasmic (PGM1) from Solanum tuberosum (Potato).